We begin with the raw amino-acid sequence, 121 residues long: uncharacterized protein (121 aa).

Residues 11–31 (IFQFFVFPFYYFLLIITEIGF) form a helical membrane-spanning segment.

It is found in the membrane. This is an uncharacterized protein from Schizosaccharomyces pombe (strain 972 / ATCC 24843) (Fission yeast).